A 76-amino-acid chain; its full sequence is Dolichyl-diphosphooligosaccharide--protein glycosyltransferase subunit OST5 (76 aa).

2 consecutive transmembrane segments (helical) span residues 14-34 and 54-74; these read FYPV…ATFI and ALIA…AGGI.

Belongs to the OST5 family. In terms of assembly, component of the oligosaccharyltransferase (OST) complex.

Its subcellular location is the membrane. In terms of biological role, subunit of the oligosaccharyl transferase (OST) complex that catalyzes the initial transfer of a defined glycan (Glc(3)Man(9)GlcNAc(2) in eukaryotes) from the lipid carrier dolichol-pyrophosphate to an asparagine residue within an Asn-X-Ser/Thr consensus motif in nascent polypeptide chains, the first step in protein N-glycosylation. N-glycosylation occurs cotranslationally and the complex associates with the Sec61 complex at the channel-forming translocon complex that mediates protein translocation across the endoplasmic reticulum (ER). All subunits are required for a maximal enzyme activity. The protein is Dolichyl-diphosphooligosaccharide--protein glycosyltransferase subunit OST5 of Dictyostelium discoideum (Social amoeba).